A 160-amino-acid chain; its full sequence is Large ribosomal subunit protein eL21 (160 aa).

This sequence belongs to the eukaryotic ribosomal protein eL21 family.

The sequence is that of Large ribosomal subunit protein eL21 (rpl21) from Dictyostelium discoideum (Social amoeba).